We begin with the raw amino-acid sequence, 716 residues long: DNA replication licensing factor MCM7 (716 aa).

A C4-type zinc finger spans residues 178 to 205; that stretch reads CEDCGHEIYQEVTSRVFMPLFKCPSSRC. The 206-residue stretch at 326 to 531 folds into the MCM domain; the sequence is IYNKLSRSLA…MDSDLELAKH (206 aa). An ATP-binding site is contributed by 376–383; it reads GDPGVAKS. Residues 508 to 511 carry the Arginine finger motif; that stretch reads SRFD.

The protein belongs to the MCM family. Component of the minichromosome maintenance (MCM) complex, a heterotetramer composed of MCM2, MCM3, MCM4, MCM5, MCM6 and MCM7. Interacts with ETG1. In terms of tissue distribution, expressed in shoot apex and flower buds.

Its subcellular location is the nucleus. The protein localises to the cytoplasm. It carries out the reaction ATP + H2O = ADP + phosphate + H(+). Probable component of the MCM2-7 complex (MCM complex) that may function as a DNA helicase and which is essential to undergo a single round of replication initiation and elongation per cell cycle in eukaryotic cells. Required for megagametophyte and embryo development. The chain is DNA replication licensing factor MCM7 (MCM7) from Arabidopsis thaliana (Mouse-ear cress).